Consider the following 233-residue polypeptide: Probable F-box protein At3g56670 (233 aa).

The F-box domain occupies 22-69 (HGGVIDIPLNTDSGVTKNTPGEIALLRFKSVSKLWSSIISSRRDFIES).

The sequence is that of Probable F-box protein At3g56670 from Arabidopsis thaliana (Mouse-ear cress).